Reading from the N-terminus, the 266-residue chain is Manganese catalase (266 aa).

Glutamate 35 provides a ligand contact to Mn(2+). 2 residues coordinate Ca(2+): aspartate 57 and aspartate 61. The Mn(2+) site is built by glutamate 66, histidine 69, glutamate 148, and histidine 181. Asparagine 218, serine 220, and glycine 222 together coordinate Ca(2+). The interval 243-266 is disordered; the sequence is ENPEAMGGIPHIKPGDPRLHNHQG. Basic and acidic residues predominate over residues 255–266; that stretch reads KPGDPRLHNHQG.

The protein belongs to the manganese catalase family. In terms of assembly, homohexamer. The cofactor is Ca(2+). Mn(2+) serves as cofactor.

The catalysed reaction is 2 H2O2 = O2 + 2 H2O. Functionally, catalyzes the decomposition of hydrogen peroxide into water and oxygen. This chain is Manganese catalase, found in Lactiplantibacillus plantarum (Lactobacillus plantarum).